Reading from the N-terminus, the 291-residue chain is Pantothenate synthetase 1 (291 aa).

His-37 (proton donor) is an active-site residue. 147–150 lines the ATP pocket; sequence GEKD. Gln-153 lines the (R)-pantoate pocket. 184–187 lines the ATP pocket; sequence ISSR.

The protein belongs to the pantothenate synthetase family. Homodimer.

Its subcellular location is the cytoplasm. The enzyme catalyses (R)-pantoate + beta-alanine + ATP = (R)-pantothenate + AMP + diphosphate + H(+). It participates in cofactor biosynthesis; (R)-pantothenate biosynthesis; (R)-pantothenate from (R)-pantoate and beta-alanine: step 1/1. In terms of biological role, catalyzes the condensation of pantoate with beta-alanine in an ATP-dependent reaction via a pantoyl-adenylate intermediate. In Frankia alni (strain DSM 45986 / CECT 9034 / ACN14a), this protein is Pantothenate synthetase 1.